A 359-amino-acid chain; its full sequence is uncharacterized protein (359 aa).

A compositionally biased stretch (low complexity) spans 73-88 (AATAGTTPATGASGSA). The interval 73–93 (AATAGTTPATGASGSARPTDA) is disordered. The Macro domain occupies 179–354 (PSTCRGDNVS…AFSAAIQAGE (176 aa)).

This is an uncharacterized protein from Mycobacterium tuberculosis (strain ATCC 25618 / H37Rv).